A 63-amino-acid polypeptide reads, in one-letter code: Large ribosomal subunit protein uL29 (63 aa).

Belongs to the universal ribosomal protein uL29 family.

The protein is Large ribosomal subunit protein uL29 of Haemophilus ducreyi (strain 35000HP / ATCC 700724).